The sequence spans 385 residues: Suppressor protein STP22 of temperature-sensitive alpha-factor receptor and arginine permease (385 aa).

The UEV domain occupies alanine 12–proline 161. The segment at proline 155–threonine 219 is disordered. Positions asparagine 168–threonine 177 are enriched in polar residues. The segment covering proline 178–proline 201 has biased composition (pro residues). The stretch at leucine 272–valine 300 forms a coiled coil. In terms of domain architecture, SB spans threonine 322–serine 385.

Belongs to the ubiquitin-conjugating enzyme family. UEV subfamily. As to quaternary structure, component of the ESCRT-I complex (endosomal sorting complex required for transport I) which consists of STP22, VPS28, SRN2 and MVB12 in a 1:1:1:1 stoichiometry. Interacts with HSE1 and VPS27. Interacts with MVB12 and SRN2.

The protein resides in the cytoplasm. Its subcellular location is the endosome. It localises to the late endosome membrane. Component of the ESCRT-I complex, a regulator of vesicular trafficking process. Binds to ubiquitinated cargo proteins and is required for the sorting of endocytic ubiquitinated cargos into multivesicular bodies (MVBs). Mediates the association to the ESCRT-0 complex. Required for vacuolar targeting of temperature-sensitive plasma membrane proteins STE2 and CAN1. The protein is Suppressor protein STP22 of temperature-sensitive alpha-factor receptor and arginine permease (STP22) of Saccharomyces cerevisiae (strain ATCC 204508 / S288c) (Baker's yeast).